The following is a 322-amino-acid chain: Lipoyl synthase (322 aa).

The [4Fe-4S] cluster site is built by Cys66, Cys71, Cys77, Cys92, Cys96, Cys99, and Ser306. In terms of domain architecture, Radical SAM core spans 78-295 (FSKGTATFMI…EKEAYELGFS (218 aa)).

The protein belongs to the radical SAM superfamily. Lipoyl synthase family. Requires [4Fe-4S] cluster as cofactor.

The protein resides in the cytoplasm. The enzyme catalyses [[Fe-S] cluster scaffold protein carrying a second [4Fe-4S](2+) cluster] + N(6)-octanoyl-L-lysyl-[protein] + 2 oxidized [2Fe-2S]-[ferredoxin] + 2 S-adenosyl-L-methionine + 4 H(+) = [[Fe-S] cluster scaffold protein] + N(6)-[(R)-dihydrolipoyl]-L-lysyl-[protein] + 4 Fe(3+) + 2 hydrogen sulfide + 2 5'-deoxyadenosine + 2 L-methionine + 2 reduced [2Fe-2S]-[ferredoxin]. The protein operates within protein modification; protein lipoylation via endogenous pathway; protein N(6)-(lipoyl)lysine from octanoyl-[acyl-carrier-protein]: step 2/2. Catalyzes the radical-mediated insertion of two sulfur atoms into the C-6 and C-8 positions of the octanoyl moiety bound to the lipoyl domains of lipoate-dependent enzymes, thereby converting the octanoylated domains into lipoylated derivatives. The chain is Lipoyl synthase from Neisseria meningitidis serogroup C (strain 053442).